A 302-amino-acid chain; its full sequence is MHDPGEHGHGRHDHDHDHDHVHDHDHDHDHVHGGGHRHAHEHEHAHEHAHGHEHGHAHAHAHAHAHEHAHGHTHEHWAHPGLFSERDAPKDRDFSARAFTVGIGGPVGSGKTALVLALCRALRDRMPLGVVTNDIFTQEDAEFLHRNKALPPERIRAVETGGCPHAAIREDISHNLVALDDLMDHVAPALLIVESGGDNLAAQYSRELVDYTIYVIDVAGGDKVPRKGGPGITQSDLLVINKTDLAPHVGADLGVMERDARRMRGDGPFLFAQCNRSQGVPEIIDHILSAMRRATTTAPPAK.

Basic and acidic residues-rich tracts occupy residues 1-32 (MHDPGEHGHGRHDHDHDHDHVHDHDHDHDHVH), 40-56 (HEHEHAHEHAHGHEHGH), and 64-76 (HAHEHAHGHTHEH). Residues 1 to 76 (MHDPGEHGHG…EHAHGHTHEH (76 aa)) form a disordered region. Residue 105 to 112 (GPVGSGKT) participates in GTP binding.

It belongs to the SIMIBI class G3E GTPase family. UreG subfamily. In terms of assembly, homodimer. UreD, UreF and UreG form a complex that acts as a GTP-hydrolysis-dependent molecular chaperone, activating the urease apoprotein by helping to assemble the nickel containing metallocenter of UreC. The UreE protein probably delivers the nickel.

It is found in the cytoplasm. Its function is as follows. Facilitates the functional incorporation of the urease nickel metallocenter. This process requires GTP hydrolysis, probably effectuated by UreG. This chain is Urease accessory protein UreG, found in Sorangium cellulosum (strain So ce56) (Polyangium cellulosum (strain So ce56)).